The sequence spans 271 residues: Aquaporin-2 (271 aa).

The Cytoplasmic segment spans residues 1-11 (MWELRSIAFSR). A helical transmembrane segment spans residues 12 to 32 (AVLAEFLATLLFVFFGLGSAL). Residues 33 to 40 (QWASSPPS) lie on the Extracellular side of the membrane. The helical transmembrane segment at 41 to 59 (VLQIAVAFGLGIGILVQAL) threads the bilayer. At 60-64 (GHVSG) the chain is on the cytoplasmic side. The discontinuously helical intramembrane region spans 65–74 (AHINPAVTVA). An NPA 1 motif is present at residues 68-70 (NPA). The Cytoplasmic segment spans residues 75–85 (CLVGCHVSFLR). The chain crosses the membrane as a helical span at residues 86–107 (AAFYVAAQLLGAVAGAAILHEI). Topologically, residues 108–127 (TPVEIRGDLAVNALHNNATA) are extracellular. An N-linked (GlcNAc...) asparagine glycan is attached at asparagine 124. The helical transmembrane segment at 128-148 (GQAVTVELFLTMQLVLCIFAS) threads the bilayer. The Cytoplasmic segment spans residues 149-156 (TDERRGDN). The chain crosses the membrane as a helical span at residues 157 to 176 (LGSPALSIGFSVTLGHLLGI). Over 177–180 (YFTG) the chain is Extracellular. Positions 181–193 (CSMNPARSLAPAV) form an intramembrane region, discontinuously helical. An NPA 2 motif is present at residues 184-186 (NPA). The Extracellular segment spans residues 194–201 (VTGKFDDH). A helical transmembrane segment spans residues 202-222 (WVFWIGPLVGAIIGSLLYNYL). At 223–271 (LFPSAKSLQERLAVLKGLEPDTDWEEREVRRRQSVELHSPQSLPRGSKA) the chain is on the cytoplasmic side. Residues 251–271 (VRRRQSVELHSPQSLPRGSKA) are disordered. Serine 256, serine 261, serine 264, and serine 269 each carry phosphoserine. Residues 261–271 (SPQSLPRGSKA) are compositionally biased toward polar residues.

This sequence belongs to the MIP/aquaporin (TC 1.A.8) family. In terms of assembly, homotetramer. Post-translationally, ser-256 phosphorylation is necessary and sufficient for expression at the apical membrane. Endocytosis is not phosphorylation-dependent. N-glycosylated. In terms of tissue distribution, detected in kidney, in cortical and the medullary collecting tubules (at protein level). Detected in kidney medulla and cortex.

Its subcellular location is the apical cell membrane. The protein resides in the basolateral cell membrane. It is found in the cell membrane. The protein localises to the cytoplasmic vesicle membrane. It localises to the golgi apparatus. Its subcellular location is the trans-Golgi network membrane. The catalysed reaction is H2O(in) = H2O(out). The enzyme catalyses glycerol(in) = glycerol(out). In terms of biological role, forms a water-specific channel that provides the plasma membranes of renal collecting duct with high permeability to water, thereby permitting water to move in the direction of an osmotic gradient. Plays an essential role in renal water homeostasis. Could also be permeable to glycerol. The polypeptide is Aquaporin-2 (Rattus norvegicus (Rat)).